Consider the following 711-residue polypeptide: Amyloid beta precursor protein binding family B member 1 (711 aa).

Position 135 is a phosphoserine (Ser-135). Disordered stretches follow at residues 140 to 257 (NTQG…SDLP), 277 to 300 (GTTQ…EESQ), and 321 to 364 (EPSE…QRNA). The segment covering 156–174 (EVEEEDEDEEEEDEEEEDL) has biased composition (acidic residues). Lys-205 carries the N6-acetyllysine modification. Positions 224–235 (SWATLSQGSPSY) are enriched in polar residues. Residues 254 to 286 (SDLPAGWMRVQDTSGTYYWHIPTGTTQWEPPGR) form the WW domain. Polar residues predominate over residues 288–300 (SPSQGNSPQEESQ). PID domains lie at 365-533 (NPGI…QVEF) and 538-700 (NELV…LWGS). The residue at position 460 (Ser-460) is a Phosphoserine; by PKC. Residue Ser-518 is modified to Phosphoserine. At Tyr-548 the chain carries Phosphotyrosine; by ABL1. Phosphoserine; by SGK1 is present on Ser-611. Lys-702 carries the post-translational modification N6-acetyllysine.

As to quaternary structure, component of a complex, at least composed of APBB1, RASD1/DEXRAS1 and APP. Interacts (via PID domain 2) with APP (with the intracellular domain of the amyloid-beta precursor protein). Interacts (via PID domain 2) with RASD1/DEXRAS1; impairs the transcription activation activity. Interacts (via PID domain 1) with KAT5/TIP60. Interacts (via the WW domain) with the proline-rich region of APBB1IP. Interacts with TSHZ1 and TSHZ2. Interacts (via the WW domain) with histone H2AX (when phosphorylated on 'Tyr-142') and the proline-rich region of ENAH. Interacts with MAPK8. Interacts (via PID domain 1) with TSHZ3 (via homeobox domain). Interacts with SET. Found in a trimeric complex with HDAC1 and TSHZ3; the interaction between HDAC1 and APBB1 is mediated by TSHZ3. Interacts (via WWW domain) with NEK6. Interacts (via WWW domain) with ABL1. Interacts with RNF157. Interacts with ARF6. In terms of processing, polyubiquitination by RNF157 leads to degradation by the proteasome. Post-translationally, phosphorylation at Ser-611 by SGK1 promotes its localization to the nucleus. Phosphorylated following nuclear translocation. Phosphorylation at Tyr-547 by ABL1 enhances transcriptional activation activity and reduces the affinity for RASD1/DEXRAS1. Phosphorylated at Ser-460 by PKC upon insulin activation. Acetylation at Lys-205 and Lys-702 by KAT5 promotes its transcription activator activity. Brain, not in liver, very low in other tissues. The long (neuron-specific) form is expressed only in brain.

The protein resides in the cell membrane. It localises to the cytoplasm. It is found in the nucleus. The protein localises to the cell projection. Its subcellular location is the growth cone. The protein resides in the nucleus speckle. Its function is as follows. Transcription coregulator that can have both coactivator and corepressor functions. Adapter protein that forms a transcriptionally active complex with the gamma-secretase-derived amyloid precursor protein (APP) intracellular domain. Plays a central role in the response to DNA damage by translocating to the nucleus and inducing apoptosis. May act by specifically recognizing and binding histone H2AX phosphorylated on 'Tyr-142' (H2AXY142ph) at double-strand breaks (DSBs), recruiting other pro-apoptosis factors such as MAPK8/JNK1. Required for histone H4 acetylation at double-strand breaks (DSBs). Its ability to specifically bind modified histones and chromatin modifying enzymes such as KAT5/TIP60, probably explains its transcription activation activity. Functions in association with TSHZ3, SET and HDAC factors as a transcriptional repressor, that inhibits the expression of CASP4. Associates with chromatin in a region surrounding the CASP4 transcriptional start site(s). Involved in hippocampal neurite branching and neuromuscular junction formation, as a result plays a role in spatial memory functioning. Plays a role in the maintenance of lens transparency. May play a role in muscle cell strength. Acts as a molecular adapter that functions in neurite outgrowth by activating the RAC1-ARF6 axis upon insulin treatment. The chain is Amyloid beta precursor protein binding family B member 1 from Rattus norvegicus (Rat).